Reading from the N-terminus, the 137-residue chain is Transcription antitermination protein NusB (137 aa).

The protein belongs to the NusB family.

Its function is as follows. Involved in transcription antitermination. Required for transcription of ribosomal RNA (rRNA) genes. Binds specifically to the boxA antiterminator sequence of the ribosomal RNA (rrn) operons. This Proteus mirabilis (strain HI4320) protein is Transcription antitermination protein NusB.